The sequence spans 902 residues: Alanine--tRNA ligase (902 aa).

Positions 567, 571, 671, and 675 each coordinate Zn(2+).

This sequence belongs to the class-II aminoacyl-tRNA synthetase family. The cofactor is Zn(2+).

The protein resides in the cytoplasm. The catalysed reaction is tRNA(Ala) + L-alanine + ATP = L-alanyl-tRNA(Ala) + AMP + diphosphate. Catalyzes the attachment of alanine to tRNA(Ala) in a two-step reaction: alanine is first activated by ATP to form Ala-AMP and then transferred to the acceptor end of tRNA(Ala). Also edits incorrectly charged Ser-tRNA(Ala) and Gly-tRNA(Ala) via its editing domain. The chain is Alanine--tRNA ligase from Mycoplasmoides gallisepticum (strain R(low / passage 15 / clone 2)) (Mycoplasma gallisepticum).